The following is a 157-amino-acid chain: Crossover junction endodeoxyribonuclease RuvC (157 aa).

Residues aspartate 7, glutamate 67, and aspartate 140 contribute to the active site. Mg(2+) contacts are provided by aspartate 7, glutamate 67, and aspartate 140.

Belongs to the RuvC family. As to quaternary structure, homodimer which binds Holliday junction (HJ) DNA. The HJ becomes 2-fold symmetrical on binding to RuvC with unstacked arms; it has a different conformation from HJ DNA in complex with RuvA. In the full resolvosome a probable DNA-RuvA(4)-RuvB(12)-RuvC(2) complex forms which resolves the HJ. Mg(2+) is required as a cofactor.

Its subcellular location is the cytoplasm. The catalysed reaction is Endonucleolytic cleavage at a junction such as a reciprocal single-stranded crossover between two homologous DNA duplexes (Holliday junction).. Functionally, the RuvA-RuvB-RuvC complex processes Holliday junction (HJ) DNA during genetic recombination and DNA repair. Endonuclease that resolves HJ intermediates. Cleaves cruciform DNA by making single-stranded nicks across the HJ at symmetrical positions within the homologous arms, yielding a 5'-phosphate and a 3'-hydroxyl group; requires a central core of homology in the junction. The consensus cleavage sequence is 5'-(A/T)TT(C/G)-3'. Cleavage occurs on the 3'-side of the TT dinucleotide at the point of strand exchange. HJ branch migration catalyzed by RuvA-RuvB allows RuvC to scan DNA until it finds its consensus sequence, where it cleaves and resolves the cruciform DNA. This chain is Crossover junction endodeoxyribonuclease RuvC, found in Rickettsia conorii (strain ATCC VR-613 / Malish 7).